Reading from the N-terminus, the 290-residue chain is Phosphonopyruvate hydrolase (290 aa).

40 to 44 (WGSGF) provides a ligand contact to substrate. Asp54 (nucleophile) is an active-site residue. Asp81 is a Mg(2+) binding site. The substrate site is built by Arg155, His186, and Arg188.

As to quaternary structure, homodimer. Homotetramer. Requires Co(2+) as cofactor. The cofactor is Mg(2+). Mn(2+) is required as a cofactor.

It carries out the reaction 3-phosphonopyruvate + H2O = pyruvate + phosphate + H(+). Its activity is regulated as follows. Partially inhibited by EDTA. Activity is restored by Co(2+), and to a lesser extent by Ni(2+) and Mg(2+). Unaffected by Cs(2+) and Ca(2+). Activity is reduced by Mn(2+) and Cu(2+). Hydrolyzes phosphonopyruvate. Not active towards phosphoenolpyruvate, glycerophosphate, phospho-L-serine or phosphoglycolic acid. The sequence is that of Phosphonopyruvate hydrolase from Variovorax sp. (strain Pal2).